The sequence spans 457 residues: Glutamyl-tRNA reductase (457 aa).

Substrate is bound by residues 49 to 52, serine 109, 114 to 116, and glutamine 120; these read TCNR and ETQ. The active-site Nucleophile is the cysteine 50. 189–194 is a binding site for NADP(+); sequence GAGKMG.

This sequence belongs to the glutamyl-tRNA reductase family. In terms of assembly, homodimer.

The enzyme catalyses (S)-4-amino-5-oxopentanoate + tRNA(Glu) + NADP(+) = L-glutamyl-tRNA(Glu) + NADPH + H(+). It participates in porphyrin-containing compound metabolism; protoporphyrin-IX biosynthesis; 5-aminolevulinate from L-glutamyl-tRNA(Glu): step 1/2. Its function is as follows. Catalyzes the NADPH-dependent reduction of glutamyl-tRNA(Glu) to glutamate 1-semialdehyde (GSA). The polypeptide is Glutamyl-tRNA reductase (Oceanobacillus iheyensis (strain DSM 14371 / CIP 107618 / JCM 11309 / KCTC 3954 / HTE831)).